The sequence spans 390 residues: MEEPGAQCAPPPPAGSETWVPQANLSSAPSQNCSAKDYIYQDSISLPWKVLLVMLLALITLATTLSNAFVIATVYRTRKLHTPANYLIASLAVTDLLVSILVMPISTMYTVTGRWTLGQVVCDFWLSSDITCCTASILHLCVIALDRYWAITDAVEYSAKRTPKRAAVMIALVWVFSISISLPPFFWRQAKAEEEVSECVVNTDHILYTVYSTVGAFYFPTLLLIALYGRIYVEARSRILKQTPNRTGKRLTRAQLITDSPGSTSSVTSINSRVPDVPSESGSPVYVNQVKVRVSDALLEKKKLMAARERKATKTLGIILGAFIVCWLPFFIISLVMPICKDACWFHLAIFDFFTWLGYLNSLINPIIYTMSNEDFKQAFHKLIRFKCTS.

At methionine 1 to leucine 46 the chain is on the extracellular side. 2 N-linked (GlcNAc...) asparagine glycosylation sites follow: asparagine 24 and asparagine 32. The helical transmembrane segment at proline 47–alanine 72 threads the bilayer. The Cytoplasmic portion of the chain corresponds to threonine 73–tyrosine 86. The helical transmembrane segment at leucine 87–valine 111 threads the bilayer. The Extracellular segment spans residues threonine 112–glutamine 119. The chain crosses the membrane as a helical span at residues valine 120 to leucine 145. A disulfide bridge connects residues cysteine 122 and cysteine 199. Residues aspartate 129 and threonine 134 each coordinate ergotamine. The short motif at aspartate 146–tyrosine 148 is the DRY motif; important for ligand-induced conformation changes and signaling element. Residues aspartate 146–arginine 165 are Cytoplasmic-facing. Residues alanine 166–proline 184 form a helical membrane-spanning segment. Topologically, residues phenylalanine 185–histidine 205 are extracellular. An ergotamine-binding site is contributed by valine 201. The helical transmembrane segment at isoleucine 206–glycine 229 threads the bilayer. Topologically, residues arginine 230–threonine 315 are cytoplasmic. A compositionally biased stretch (polar residues) spans aspartate 259–serine 272. The tract at residues aspartate 259–serine 281 is disordered. A helical membrane pass occupies residues leucine 316–methionine 337. The Extracellular segment spans residues proline 338 to histidine 347. Residues leucine 348–threonine 370 traverse the membrane as a helical segment. The short motif at asparagine 365–tyrosine 369 is the NPxxY motif; important for ligand-induced conformation changes and signaling element. Residues methionine 371–serine 390 lie on the Cytoplasmic side of the membrane. A lipid anchor (S-palmitoyl cysteine) is attached at cysteine 388.

It belongs to the G-protein coupled receptor 1 family. As to quaternary structure, homodimer. Heterodimer with HTR1D. Post-translationally, phosphorylated. Desensitization of the receptor may be mediated by its phosphorylation. In terms of processing, palmitoylated. As to expression, detected in cerebral artery smooth muscle cells (at protein level). Detected in brain cortex, striatum, amygdala, medulla, hippocampus, caudate nucleus and putamen.

It localises to the cell membrane. G-protein coupled receptor for 5-hydroxytryptamine (serotonin). Also functions as a receptor for ergot alkaloid derivatives, various anxiolytic and antidepressant drugs and other psychoactive substances, such as lysergic acid diethylamide (LSD). Ligand binding causes a conformation change that triggers signaling via guanine nucleotide-binding proteins (G proteins) and modulates the activity of downstream effectors, such as adenylate cyclase. HTR1B is coupled to G(i)/G(o) G alpha proteins and mediates inhibitory neurotransmission by inhibiting adenylate cyclase activity. Arrestin family members inhibit signaling via G proteins and mediate activation of alternative signaling pathways. Regulates the release of 5-hydroxytryptamine, dopamine and acetylcholine in the brain, and thereby affects neural activity, nociceptive processing, pain perception, mood and behavior. Besides, plays a role in vasoconstriction of cerebral arteries. This Homo sapiens (Human) protein is 5-hydroxytryptamine receptor 1B.